The following is a 1092-amino-acid chain: NAD-specific glutamate dehydrogenase (1092 aa).

The active site involves lysine 626.

It belongs to the Glu/Leu/Phe/Val dehydrogenases family. In terms of assembly, homotetramer. Interacts with NNK1. Phosphorylated by a complex containing the NNK1 kinase.

The catalysed reaction is L-glutamate + NAD(+) + H2O = 2-oxoglutarate + NH4(+) + NADH + H(+). Its function is as follows. NAD(+)-dependent glutamate dehydrogenase which degrades glutamate to ammonia and alpha-ketoglutarate. In Saccharomyces cerevisiae (strain ATCC 204508 / S288c) (Baker's yeast), this protein is NAD-specific glutamate dehydrogenase (GDH2).